Reading from the N-terminus, the 381-residue chain is Lysophosphatidylserine lipase ABHD12 (381 aa).

At 1–58 (MRKRNESVTVEHERAAAAPAPLDKGCSLRHSLRLPAADTGMKRPLGRRHGLWFRLRRL) the chain is on the cytoplasmic side. Residues 59-79 (IIWLLGVYIAIPFLVKLCPAI) form a helical membrane-spanning segment. Topologically, residues 80–381 (QAKLVFLNFV…LGIPEHEHHH (302 aa)) are extracellular. Asn-106 is a glycosylation site (N-linked (GlcNAc...) asparagine). Ser-229 functions as the Nucleophile in the catalytic mechanism. Residues Asp-316 and His-355 each act as charge relay system in the active site.

The protein belongs to the serine esterase family.

The protein localises to the endoplasmic reticulum membrane. The enzyme catalyses 1-(9Z-octadecenoyl)-sn-glycero-3-phospho-L-serine + H2O = sn-glycero-3-phospho-L-serine + (9Z)-octadecenoate + H(+). The catalysed reaction is 1-(9Z-octadecenoyl)-sn-glycero-3-phospho-(1'-sn-glycerol) + H2O = sn-glycero-3-phospho-(1'-sn-glycerol) + (9Z)-octadecenoate + H(+). It carries out the reaction 1-(9Z-octadecenoyl)-sn-glycero-3-phospho-(1D-myo-inositol) + H2O = sn-glycero-3-phospho-1D-myo-inositol + (9Z)-octadecenoate + H(+). It catalyses the reaction 1-(9Z-octadecenoyl)-sn-glycero-3-phosphoethanolamine + H2O = sn-glycero-3-phosphoethanolamine + (9Z)-octadecenoate + H(+). The enzyme catalyses 1-(9Z-octadecenoyl)-sn-glycero-3-phosphocholine + H2O = 1-(9Z-octadecenoyl)-sn-glycerol + phosphocholine + H(+). The catalysed reaction is 2-(9Z-octadecenoyl)-glycerol + H2O = glycerol + (9Z)-octadecenoate + H(+). It carries out the reaction 1-hexadecanoyl-sn-glycero-3-phospho-L-serine + H2O = sn-glycero-3-phospho-L-serine + hexadecanoate + H(+). It catalyses the reaction 2-(5Z,8Z,11Z,14Z-eicosatetraenoyl)-glycerol + H2O = glycerol + (5Z,8Z,11Z,14Z)-eicosatetraenoate + H(+). The enzyme catalyses Hydrolyzes glycerol monoesters of long-chain fatty acids.. The catalysed reaction is 1-decanoylglycerol + H2O = decanoate + glycerol + H(+). It carries out the reaction 1-dodecanoylglycerol + H2O = dodecanoate + glycerol + H(+). It catalyses the reaction 1-tetradecanoylglycerol + H2O = tetradecanoate + glycerol + H(+). The enzyme catalyses 2-hexadecanoylglycerol + H2O = glycerol + hexadecanoate + H(+). The catalysed reaction is 1-(9Z-octadecenoyl)-glycerol + H2O = glycerol + (9Z)-octadecenoate + H(+). It carries out the reaction 2-(9Z,12Z-octadecadienoyl)-glycerol + H2O = (9Z,12Z)-octadecadienoate + glycerol + H(+). It catalyses the reaction 1-(5Z,8Z,11Z,14Z-eicosatetraenoyl)-glycerol + H2O = glycerol + (5Z,8Z,11Z,14Z)-eicosatetraenoate + H(+). The enzyme catalyses 1-(9Z,12Z-octadecadienoyl)-glycerol + H2O = (9Z,12Z)-octadecadienoate + glycerol + H(+). The catalysed reaction is 1-hexadecanoylglycerol + H2O = glycerol + hexadecanoate + H(+). It carries out the reaction 1-octadecanoylglycerol + H2O = octadecanoate + glycerol + H(+). It catalyses the reaction 1-octadecanoyl-2-(9,10-epoxyoctadecanoyl)-sn-glycero-3-phospho-L-serine + H2O = 9,10-epoxyoctadecanoate + 1-octadecanoyl-sn-glycero-3-phosphoserine + H(+). The enzyme catalyses 1-octadecanoyl-2-(10-hydroxyoctadecanoyl)-sn-glycero-3-phospho-L-serine + H2O = 1-octadecanoyl-sn-glycero-3-phosphoserine + 10-hydroxyoctadecanoate + H(+). The catalysed reaction is 1-hexadecanoyl-2-(10-hydroxyoctadecanoyl)-sn-glycero-3-phospho-L-serine + H2O = 10-hydroxyoctadecanoate + 1-hexadecanoyl-sn-glycero-3-phospho-L-serine + H(+). In terms of biological role, lysophosphatidylserine (LPS) lipase that mediates the hydrolysis of lysophosphatidylserine, a class of signaling lipids that regulates immunological and neurological processes. Represents a major lysophosphatidylserine lipase in the brain, thereby playing a key role in the central nervous system. Also able to hydrolyze oxidized phosphatidylserine; oxidized phosphatidylserine is produced in response to severe inflammatory stress and constitutes a proapoptotic 'eat me' signal. Also has monoacylglycerol (MAG) lipase activity: hydrolyzes 2-arachidonoylglycerol (2-AG), thereby acting as a regulator of endocannabinoid signaling pathways. Has a strong preference for very-long-chain lipid substrates; substrate specificity is likely due to improved catalysis and not improved substrate binding. The chain is Lysophosphatidylserine lipase ABHD12 from Gallus gallus (Chicken).